A 403-amino-acid polypeptide reads, in one-letter code: CCA-adding enzyme (403 aa).

ATP contacts are provided by Gly-32 and Arg-35. 2 residues coordinate CTP: Gly-32 and Arg-35. Mg(2+)-binding residues include Asp-45 and Asp-47. ATP-binding residues include Arg-116, Asp-159, Arg-162, Arg-165, and Arg-168. CTP-binding residues include Arg-116, Asp-159, Arg-162, Arg-165, and Arg-168.

It belongs to the tRNA nucleotidyltransferase/poly(A) polymerase family. Bacterial CCA-adding enzyme type 3 subfamily. Homodimer. Mg(2+) is required as a cofactor.

The catalysed reaction is a tRNA precursor + 2 CTP + ATP = a tRNA with a 3' CCA end + 3 diphosphate. The enzyme catalyses a tRNA with a 3' CCA end + 2 CTP + ATP = a tRNA with a 3' CCACCA end + 3 diphosphate. In terms of biological role, catalyzes the addition and repair of the essential 3'-terminal CCA sequence in tRNAs without using a nucleic acid template. Adds these three nucleotides in the order of C, C, and A to the tRNA nucleotide-73, using CTP and ATP as substrates and producing inorganic pyrophosphate. tRNA 3'-terminal CCA addition is required both for tRNA processing and repair. Also involved in tRNA surveillance by mediating tandem CCA addition to generate a CCACCA at the 3' terminus of unstable tRNAs. While stable tRNAs receive only 3'-terminal CCA, unstable tRNAs are marked with CCACCA and rapidly degraded. This chain is CCA-adding enzyme, found in Streptococcus uberis (strain ATCC BAA-854 / 0140J).